Consider the following 59-residue polypeptide: Cecropin-C type 1 (59 aa).

Positions 1–23 (MNFTKIFVLIAMAALLLVGQSEA) are cleaved as a signal peptide.

It localises to the secreted. Its function is as follows. Cecropins have lytic and antibacterial activity against several Gram-positive and Gram-negative bacteria. This chain is Cecropin-C type 1 (CECC1), found in Aedes albopictus (Asian tiger mosquito).